The following is a 310-amino-acid chain: Olfactory receptor 8B12 (310 aa).

Residues 1 to 24 (MAAKNSSVTEFILEGLTHQPGLRI) are Extracellular-facing. N5 carries an N-linked (GlcNAc...) asparagine glycan. A helical membrane pass occupies residues 25-45 (PLFFLFLGFYTVTVVGNLGLI). The Cytoplasmic portion of the chain corresponds to 46–53 (TLIGLNSH). A helical membrane pass occupies residues 54 to 74 (LHTPMYFFLFNLSLIDFCFST). Over 75-98 (TITPKMLMSFVSRKNIISFTGCMT) the chain is Extracellular. C96 and C188 form a disulfide bridge. A helical membrane pass occupies residues 99-119 (QLFFFCFFVVSESFILSAMAY). Residues 120–138 (DRYVAICNPLLYTVTMSCQ) lie on the Cytoplasmic side of the membrane. A helical membrane pass occupies residues 139–159 (VCLLLLLGAYGMGFAGAMAHT). The Extracellular portion of the chain corresponds to 160–196 (GSIMNLTFCADNLVNHFMCDILPLLELSCNSSYMNEL). 2 N-linked (GlcNAc...) asparagine glycosylation sites follow: N164 and N189. Residues 197-216 (VVFIVVAVDVGMPIVTVFIS) form a helical membrane-spanning segment. Residues 217–236 (YALILSSILHNSSTEGRSKA) lie on the Cytoplasmic side of the membrane. A helical membrane pass occupies residues 237 to 257 (FSTCSSHIIVVSLFFGSGAFM). Residues 258–270 (YLKPLSILPLEQG) lie on the Extracellular side of the membrane. A helical transmembrane segment spans residues 271–291 (KVSSLFYTIIVPVLNPLIYSL). Residues 292–310 (RNKDVKVALRRTLGRKIFS) are Cytoplasmic-facing.

It belongs to the G-protein coupled receptor 1 family.

The protein localises to the cell membrane. Its function is as follows. Odorant receptor. The chain is Olfactory receptor 8B12 (OR8B12) from Homo sapiens (Human).